We begin with the raw amino-acid sequence, 207 residues long: Large ribosomal subunit protein bL17m (207 aa).

A compositionally biased stretch (basic and acidic residues) spans 173-200; the sequence is EKESEHARLKEDHEDEKTVKKDWKRGDP. Positions 173 to 207 are disordered; it reads EKESEHARLKEDHEDEKTVKKDWKRGDPIPRPTYI.

It belongs to the bacterial ribosomal protein bL17 family. Component of the mitochondrial large ribosomal subunit (mt-LSU). Mature yeast 74S mitochondrial ribosomes consist of a small (37S) and a large (54S) subunit. The 37S small subunit contains a 15S ribosomal RNA (15S mt-rRNA) and at least 32 different proteins. The 54S large subunit contains a 21S rRNA (21S mt-rRNA) and at least 45 different proteins.

It localises to the mitochondrion. Component of the mitochondrial ribosome (mitoribosome), a dedicated translation machinery responsible for the synthesis of mitochondrial genome-encoded proteins, including at least some of the essential transmembrane subunits of the mitochondrial respiratory chain. The mitoribosomes are attached to the mitochondrial inner membrane and translation products are cotranslationally integrated into the membrane. The sequence is that of Large ribosomal subunit protein bL17m (mrpl8) from Schizosaccharomyces pombe (strain 972 / ATCC 24843) (Fission yeast).